We begin with the raw amino-acid sequence, 752 residues long: Peptidyl-prolyl cis-trans isomerase G (752 aa).

A PPIase cyclophilin-type domain is found at 11-176; the sequence is FFDIAINNQP…AEVRILSCGE (166 aa). A compositionally biased stretch (basic residues) spans 182–193; it reads KVKKEEKKRHKS. Positions 182–752 are disordered; sequence KVKKEEKKRH…SPGTDEDKSG (571 aa). Residues 194 to 214 show a composition bias toward low complexity; that stretch reads SSSSSSSDSDSSSDSQSSSDS. The segment covering 226 to 251 has biased composition (basic residues); sequence RKRKKKHRKNSRKHKKEKKKRKKSKK. Ser-252, Ser-254, Ser-255, Ser-257, and Ser-288 each carry phosphoserine. The span at 290–308 shows a compositional bias: basic and acidic residues; it reads PKADDKERKNREREREREC. Ser-313 carries the post-translational modification Phosphoserine. Over residues 327–345 the composition is skewed to basic residues; the sequence is FGRKIKGRGPRRYRTPSRS. 2 stretches are compositionally biased toward basic and acidic residues: residues 346–366 and 377–447; these read RSRD…EMQR and RWIK…DKYN. A Phosphoserine modification is found at Ser-354. Phosphothreonine is present on Thr-356. Ser-384 bears the Phosphoserine mark. Residue Lys-390 forms a Glycyl lysine isopeptide (Lys-Gly) (interchain with G-Cter in SUMO2) linkage. A phosphoserine mark is found at Ser-395, Ser-411, and Ser-413. Positions 448–461 are enriched in basic residues; the sequence is KNKVKKRGKSKSRS. Composition is skewed to basic and acidic residues over residues 462 to 552 and 577 to 598; these read KSKE…DLTK and RSHD…QEYR. Basic residues predominate over residues 599–625; that stretch reads RRGRSRSRDRRTPGRSRSKDRRRRRRD. A compositionally biased stretch (basic and acidic residues) spans 626-682; the sequence is SRSSEREESQSRNKEKYRSQDSKSSHRKENSEGEKRMYSKSRDHSSSNNNREKKADI. Residues Ser-685 and Ser-688 each carry the phosphoserine modification. Over residues 685–705 the composition is skewed to polar residues; sequence SPVSKTKQSSQDNEVKSSTLK. Lys-691 participates in a covalent cross-link: Glycyl lysine isopeptide (Lys-Gly) (interchain with G-Cter in SUMO2). Residues Ser-694, Ser-742, and Ser-743 each carry the phosphoserine modification. Over residues 706–752 the composition is skewed to basic and acidic residues; the sequence is NQEDEKTRSPVEKENQKSKGQENDHVHDKNKKCDHESSPGTDEDKSG. Residue Thr-746 is modified to Phosphothreonine. Residue Ser-751 is modified to Phosphoserine.

As to quaternary structure, interacts with CLK1, PNN and with the phosphorylated C-terminal domain of RNA polymerase II.

The protein resides in the nucleus matrix. It localises to the nucleus speckle. The catalysed reaction is [protein]-peptidylproline (omega=180) = [protein]-peptidylproline (omega=0). Its activity is regulated as follows. Inhibited by cyclosporin A (CsA). Functionally, PPIase that catalyzes the cis-trans isomerization of proline imidic peptide bonds in oligopeptides and may therefore assist protein folding. May be implicated in the folding, transport, and assembly of proteins. May play an important role in the regulation of pre-mRNA splicing. This chain is Peptidyl-prolyl cis-trans isomerase G (Ppig), found in Rattus norvegicus (Rat).